The chain runs to 398 residues: 4-hydroxy-3-methylbut-2-enyl diphosphate reductase (398 aa).

C66 contacts [4Fe-4S] cluster. A (2E)-4-hydroxy-3-methylbut-2-enyl diphosphate-binding site is contributed by H96. H96 provides a ligand contact to dimethylallyl diphosphate. Isopentenyl diphosphate is bound at residue H96. C157 contributes to the [4Fe-4S] cluster binding site. H185 contributes to the (2E)-4-hydroxy-3-methylbut-2-enyl diphosphate binding site. A dimethylallyl diphosphate-binding site is contributed by H185. Residue H185 coordinates isopentenyl diphosphate. E187 acts as the Proton donor in catalysis. T250 is a (2E)-4-hydroxy-3-methylbut-2-enyl diphosphate binding site. C288 contacts [4Fe-4S] cluster. S317, S318, N319, and S380 together coordinate (2E)-4-hydroxy-3-methylbut-2-enyl diphosphate. Dimethylallyl diphosphate is bound by residues S317, S318, N319, and S380. S317, S318, N319, and S380 together coordinate isopentenyl diphosphate.

It belongs to the IspH family. [4Fe-4S] cluster is required as a cofactor.

The catalysed reaction is isopentenyl diphosphate + 2 oxidized [2Fe-2S]-[ferredoxin] + H2O = (2E)-4-hydroxy-3-methylbut-2-enyl diphosphate + 2 reduced [2Fe-2S]-[ferredoxin] + 2 H(+). The enzyme catalyses dimethylallyl diphosphate + 2 oxidized [2Fe-2S]-[ferredoxin] + H2O = (2E)-4-hydroxy-3-methylbut-2-enyl diphosphate + 2 reduced [2Fe-2S]-[ferredoxin] + 2 H(+). It participates in isoprenoid biosynthesis; dimethylallyl diphosphate biosynthesis; dimethylallyl diphosphate from (2E)-4-hydroxy-3-methylbutenyl diphosphate: step 1/1. It functions in the pathway isoprenoid biosynthesis; isopentenyl diphosphate biosynthesis via DXP pathway; isopentenyl diphosphate from 1-deoxy-D-xylulose 5-phosphate: step 6/6. In terms of biological role, catalyzes the conversion of 1-hydroxy-2-methyl-2-(E)-butenyl 4-diphosphate (HMBPP) into a mixture of isopentenyl diphosphate (IPP) and dimethylallyl diphosphate (DMAPP). Acts in the terminal step of the DOXP/MEP pathway for isoprenoid precursor biosynthesis. The chain is 4-hydroxy-3-methylbut-2-enyl diphosphate reductase from Prochlorococcus marinus (strain MIT 9301).